Reading from the N-terminus, the 515-residue chain is MQLNPAEISDLIKAKIENLSVNAEVRTRGTVISVTDGIVRIHGLSDAMQGEMLEFPGNTFGLAMNLERDSVGAVVLGEYEHIKEGDTVTCTGRILEVPVGRELVGRVVDALGRPIDGKGPINTTLTAPIEKIAPGVIARKSVDQPMQTGLKAIDSMVPVGRGQRELIIGDRQTGKTAVALDAIVNQKGTGVICIYVAIGQKASSIANVVRKLEEHGAMEHTIVVAATASEAAALQYIAPYSGCTMGEFFRDRGEDALIVYDDLSKQAVAYRQISLLLRRPPGREAYPGDVFYLHSRLLERAARVNEHEVEKLTNGEVKGKTGSLTALPIIETQAGDVSAFVPTNVISITDGQIFLETDLFNAGIRPAINAGISVSRVGGAAQTKVIKKLGGGIRLALAQYRELAAFSQFASDLDEATRKQLEHGEVVTELMKQKQFSTLNTAEMALTLWAINNGSYSDVPVAKALAFESEFLSFVRTQHPEVLEAVNASGAMSDESEKTLEAAMKSFKSSYAYQA.

An ATP-binding site is contributed by 169–176; that stretch reads GDRQTGKT.

Belongs to the ATPase alpha/beta chains family. In terms of assembly, F-type ATPases have 2 components, CF(1) - the catalytic core - and CF(0) - the membrane proton channel. CF(1) has five subunits: alpha(3), beta(3), gamma(1), delta(1), epsilon(1). CF(0) has three main subunits: a(1), b(2) and c(9-12). The alpha and beta chains form an alternating ring which encloses part of the gamma chain. CF(1) is attached to CF(0) by a central stalk formed by the gamma and epsilon chains, while a peripheral stalk is formed by the delta and b chains.

Its subcellular location is the cell inner membrane. The catalysed reaction is ATP + H2O + 4 H(+)(in) = ADP + phosphate + 5 H(+)(out). Produces ATP from ADP in the presence of a proton gradient across the membrane. The alpha chain is a regulatory subunit. The protein is ATP synthase subunit alpha of Neisseria meningitidis serogroup C (strain 053442).